Reading from the N-terminus, the 102-residue chain is Hemoglobin subunit beta-Z (102 aa).

The Globin domain maps to 1 to 102; it reads FGNLSSAQAI…VANALSHKYH (102 aa). Heme b-binding residues include H19 and H48.

This sequence belongs to the globin family. As to quaternary structure, heterotetramer of two alpha chains and two beta chains.

This is an embryonic beta chain. The sequence is that of Hemoglobin subunit beta-Z (HBBZ) from Mesocricetus auratus (Golden hamster).